A 400-amino-acid chain; its full sequence is S-adenosylmethionine synthase (400 aa).

Histidine 17 lines the ATP pocket. Aspartate 19 contacts Mg(2+). A K(+)-binding site is contributed by glutamate 45. L-methionine is bound by residues glutamate 58 and glutamine 101. Residues 101-111 form a flexible loop region; the sequence is QSADIAMGVDQ. Residues 177-179, 244-245, aspartate 253, 259-260, alanine 276, and lysine 280 contribute to the ATP site; these read DGK, RF, and RK. Aspartate 253 contributes to the L-methionine binding site. Lysine 284 provides a ligand contact to L-methionine.

Belongs to the AdoMet synthase family. As to quaternary structure, homotetramer; dimer of dimers. Mg(2+) is required as a cofactor. Requires K(+) as cofactor.

It is found in the cytoplasm. The catalysed reaction is L-methionine + ATP + H2O = S-adenosyl-L-methionine + phosphate + diphosphate. It participates in amino-acid biosynthesis; S-adenosyl-L-methionine biosynthesis; S-adenosyl-L-methionine from L-methionine: step 1/1. Catalyzes the formation of S-adenosylmethionine (AdoMet) from methionine and ATP. The overall synthetic reaction is composed of two sequential steps, AdoMet formation and the subsequent tripolyphosphate hydrolysis which occurs prior to release of AdoMet from the enzyme. This Bacillus subtilis (strain 168) protein is S-adenosylmethionine synthase.